We begin with the raw amino-acid sequence, 428 residues long: 3-phosphoshikimate 1-carboxyvinyltransferase (428 aa).

Positions 21, 22, and 26 each coordinate 3-phosphoshikimate. Lys21 contributes to the phosphoenolpyruvate binding site. Phosphoenolpyruvate-binding residues include Gly94 and Arg122. Positions 166, 167, 168, 194, 306, and 333 each coordinate 3-phosphoshikimate. Gln168 contributes to the phosphoenolpyruvate binding site. Catalysis depends on Asp306, which acts as the Proton acceptor. The phosphoenolpyruvate site is built by Arg337, Arg379, and Lys405.

This sequence belongs to the EPSP synthase family. As to quaternary structure, monomer.

The protein resides in the cytoplasm. It catalyses the reaction 3-phosphoshikimate + phosphoenolpyruvate = 5-O-(1-carboxyvinyl)-3-phosphoshikimate + phosphate. It participates in metabolic intermediate biosynthesis; chorismate biosynthesis; chorismate from D-erythrose 4-phosphate and phosphoenolpyruvate: step 6/7. Functionally, catalyzes the transfer of the enolpyruvyl moiety of phosphoenolpyruvate (PEP) to the 5-hydroxyl of shikimate-3-phosphate (S3P) to produce enolpyruvyl shikimate-3-phosphate and inorganic phosphate. The polypeptide is 3-phosphoshikimate 1-carboxyvinyltransferase (Clostridium acetobutylicum (strain ATCC 824 / DSM 792 / JCM 1419 / IAM 19013 / LMG 5710 / NBRC 13948 / NRRL B-527 / VKM B-1787 / 2291 / W)).